The chain runs to 102 residues: Small ribosomal subunit protein uS10 (102 aa).

This sequence belongs to the universal ribosomal protein uS10 family. In terms of assembly, part of the 30S ribosomal subunit.

In terms of biological role, involved in the binding of tRNA to the ribosomes. The protein is Small ribosomal subunit protein uS10 of Exiguobacterium sibiricum (strain DSM 17290 / CCUG 55495 / CIP 109462 / JCM 13490 / 255-15).